The primary structure comprises 211 residues: Nucleoside triphosphate pyrophosphatase (211 aa).

Aspartate 75 acts as the Proton acceptor in catalysis.

Belongs to the Maf family. A divalent metal cation serves as cofactor.

The protein localises to the cytoplasm. It carries out the reaction a ribonucleoside 5'-triphosphate + H2O = a ribonucleoside 5'-phosphate + diphosphate + H(+). The catalysed reaction is a 2'-deoxyribonucleoside 5'-triphosphate + H2O = a 2'-deoxyribonucleoside 5'-phosphate + diphosphate + H(+). Functionally, nucleoside triphosphate pyrophosphatase. May have a dual role in cell division arrest and in preventing the incorporation of modified nucleotides into cellular nucleic acids. In Prochlorococcus marinus (strain NATL2A), this protein is Nucleoside triphosphate pyrophosphatase.